A 188-amino-acid polypeptide reads, in one-letter code: Pro-adrenomedullin (188 aa).

Residues 1–21 form the signal peptide; the sequence is MKLVPVALMYLGSLAFLGADT. The residue at position 41 (R41) is an Arginine amide. Residues 45-92 constitute a propeptide that is removed on maturation; the sequence is ELRLSSSYPTGIADLKAGPAQTVIRPQDVKGSSRSPQASIPDAARIRV. C110 and C115 are joined by a disulfide. A disordered region spans residues 131 to 177; sequence DKDGVAPRSKISPQGYGRRRRRSLPEASLGRTLRSQEPQAHGAPASP. Y146 bears the Tyrosine amide mark. Residues 153-188 constitute a propeptide, preproAM C-terminal fragment; the sequence is SLPEASLGRTLRSQEPQAHGAPASPAHQVLATLFRI.

It belongs to the adrenomedullin family. Highly expressed in adrenal glands, lung and kidney.

The protein localises to the secreted. Functionally, adrenomedullin/ADM and proadrenomedullin N-20 terminal peptide/PAMP are peptide hormones that act as potent hypotensive and vasodilatator agents. Numerous actions have been reported most related to the physiologic control of fluid and electrolyte homeostasis. Its function is as follows. ADM function is mediated by the CALCRL-RAMP2 and CALCRL-RAMP3 receptor complexes with ADM showing the highest potency for the CALCRL-RAMP2 complex. The protein is Pro-adrenomedullin (ADM) of Sus scrofa (Pig).